The sequence spans 255 residues: HTH-type transcriptional regulator GlpR (255 aa).

In terms of domain architecture, HTH deoR-type spans 3 to 58 (PAERKRRIVELVSDSDGRSVESLSDHLGYSKATIRRDLRELEDRGLIERSHGGAVP). The segment at residues 20-39 (RSVESLSDHLGYSKATIRRD) is a DNA-binding region (H-T-H motif).

Transcriptional repressor of genes encoding both fructose and glucose metabolic enzymes such as phosphofructokinase (PFK) or 2-keto-3-deoxy-D-gluconate kinase (KDGK) during growth on glycerol. Required for the glycerol-mediated repression of pfkB-specific transcripts, but not needed for the high-levels of the pfkB-specific transcript present when cells are grown on fructose. This is HTH-type transcriptional regulator GlpR (glpR) from Haloferax volcanii (strain ATCC 29605 / DSM 3757 / JCM 8879 / NBRC 14742 / NCIMB 2012 / VKM B-1768 / DS2) (Halobacterium volcanii).